The following is a 546-amino-acid chain: Chaperonin GroEL (546 aa).

ATP contacts are provided by residues 30-33 (TLGP), Lys51, 87-91 (DGTTT), Gly415, and Asp496. Positions 526–546 (PEDKPAPAMPGGMGGMGGMDF) are disordered. Residues 536–546 (GGMGGMGGMDF) show a composition bias toward gly residues.

The protein belongs to the chaperonin (HSP60) family. In terms of assembly, forms a cylinder of 14 subunits composed of two heptameric rings stacked back-to-back. Interacts with the co-chaperonin GroES.

It localises to the cytoplasm. The catalysed reaction is ATP + H2O + a folded polypeptide = ADP + phosphate + an unfolded polypeptide.. Its function is as follows. Together with its co-chaperonin GroES, plays an essential role in assisting protein folding. The GroEL-GroES system forms a nano-cage that allows encapsulation of the non-native substrate proteins and provides a physical environment optimized to promote and accelerate protein folding. This is Chaperonin GroEL from Zymomonas mobilis subsp. mobilis (strain ATCC 31821 / ZM4 / CP4).